The following is a 453-amino-acid chain: Phenylalanine-4-hydroxylase (453 aa).

The residue at position 2 (A2) is an N-acetylalanine. The residue at position 16 (S16) is a Phosphoserine. Positions 36–114 (SLIFSLKEEV…TVHELSRDKE (79 aa)) constitute an ACT domain. Positions 285, 290, and 330 each coordinate Fe cation.

This sequence belongs to the biopterin-dependent aromatic amino acid hydroxylase family. Homodimer and homotetramer. The cofactor is Fe(2+). Phosphorylation at Ser-16 increases basal activity and facilitates activation by the substrate phenylalanine.

It carries out the reaction (6R)-L-erythro-5,6,7,8-tetrahydrobiopterin + L-phenylalanine + O2 = (4aS,6R)-4a-hydroxy-L-erythro-5,6,7,8-tetrahydrobiopterin + L-tyrosine. It participates in amino-acid degradation; L-phenylalanine degradation; acetoacetate and fumarate from L-phenylalanine: step 1/6. Its activity is regulated as follows. N-terminal region of PAH is thought to contain allosteric binding sites for phenylalanine and to constitute an 'inhibitory' domain that regulates the activity of a catalytic domain in the C-terminal portion of the molecule. In terms of biological role, catalyzes the hydroxylation of L-phenylalanine to L-tyrosine. This chain is Phenylalanine-4-hydroxylase (Pah), found in Mus musculus (Mouse).